The primary structure comprises 104 residues: Large ribosomal subunit protein bL21 (104 aa).

It belongs to the bacterial ribosomal protein bL21 family. As to quaternary structure, part of the 50S ribosomal subunit. Contacts protein L20.

Functionally, this protein binds to 23S rRNA in the presence of protein L20. The protein is Large ribosomal subunit protein bL21 of Streptococcus equi subsp. equi (strain 4047).